We begin with the raw amino-acid sequence, 151 residues long: Transcription antitermination protein NusB (151 aa).

The protein belongs to the NusB family.

Involved in transcription antitermination. Required for transcription of ribosomal RNA (rRNA) genes. Binds specifically to the boxA antiterminator sequence of the ribosomal RNA (rrn) operons. The chain is Transcription antitermination protein NusB from Thermodesulfovibrio yellowstonii (strain ATCC 51303 / DSM 11347 / YP87).